We begin with the raw amino-acid sequence, 234 residues long: uncharacterized protein (234 aa).

The next 4 helical transmembrane spans lie at 28–48, 67–87, 123–143, and 154–174; these read IVIIALIYCILHDTMSLSIIS, FQIFIFLISILILQLTSFDPI, GGVDLFILLDACLLWANSGTI, and LYCIFHCSFILLGLGVGGLLY.

The protein belongs to the complex I subunit 2 family.

Its subcellular location is the mitochondrion membrane. This is an uncharacterized protein from Neurospora crassa (strain ATCC 24698 / 74-OR23-1A / CBS 708.71 / DSM 1257 / FGSC 987).